A 964-amino-acid chain; its full sequence is Adhesion defective protein 3 (964 aa).

The tract at residues 1–32 (MADFMDIEPSSHSAKASQYESSAPASSSLGNS) is disordered. Positions 16 to 32 (ASQYESSAPASSSLGNS) are enriched in low complexity. Residues 34–66 (PNESLDYYIYDYFVKHNFEEAAQAFLRESKIQI) form the LisH domain. Low complexity predominate over residues 69–83 (SSSSTAFSPSNNNAP). Disordered regions lie at residues 69-125 (SSSS…EETN), 241-273 (PKGT…PASA), 476-523 (VSMK…TSRM), 572-596 (QTLS…MSMD), and 664-914 (APMI…KPIS). 3 stretches are compositionally biased toward polar residues: residues 93–103 (LASPSKISESI), 261–270 (AMQNPHNSFP), and 508–523 (TQAN…TSRM). The span at 575-589 (SSGNQPPQQSGPNPN) shows a compositional bias: low complexity. Polar residues-rich tracts occupy residues 664–700 (APMI…TNRN), 707–716 (SPHQQFSPSA), 724–752 (RSMS…QNKE), 767–801 (AFPQ…SSLH), 818–828 (TIRTTERSTFS), and 857–868 (GGTNSISQDTTQ). Residues 869 to 885 (SLQMQSNSVNSSSMVDA) show a composition bias toward low complexity. A compositionally biased stretch (polar residues) spans 894-905 (GDTSALDSNAKN).

Belongs to the FLO8 family.

The protein resides in the cytoplasm. The protein localises to the nucleus. Probable transcriptional regulator involved in cell adhesion. This is Adhesion defective protein 3 (adn3) from Schizosaccharomyces pombe (strain 972 / ATCC 24843) (Fission yeast).